Consider the following 481-residue polypeptide: MSNSYLSFFVLSSILVLTLIFFFMKRKKTKFNLPPGSMGLPFIGETFGYLKPCSATTMGAYMENRIARYGTIYKTKLFGEDTIVSADAELNRLIFQNHGKLFDTNYPKSIAEILGKWSILTIVGDVHRELRNVSLNFMSYARLKTHFLKDSENSALLVLNSWKENCTIEAQSEAKKFTFNVITKQIMSLDPRNPETEELRDEYLSFMNGVVSAPFNLPGTPYRKALKSRKIILKFIEGKMEERIKRNQEGKKDLEENDDLLNWVLKHTNLSTDQILDLVLGMVFGGYETSSAATALAMYFLPGCPKAIQQLREEHQAIARSKKKAGEVELTWDDYKKMEFTHCVVNETLRLGNVVRFVHRKSIKDVRFKGYDIPCGWNVMPVISAVHLNPSNFEDPQHFNPWRWQSGNWASLNSNFMPFGGGAKICPGMELAKLEVAVFIHHIILKYNWDLVDVDDKPIIHPLVDFPKGLRIRVQRQPTLI.

The helical transmembrane segment at 4–24 (SYLSFFVLSSILVLTLIFFFM) threads the bilayer. C426 is a heme binding site.

The protein belongs to the cytochrome P450 family. Mainly expressed in leaves and seed pods and, at low levels, in flowers and stems.

Its subcellular location is the membrane. It participates in steroid metabolism; cholesterol metabolism. Functionally, involved in the biosynthesis of spiroketal steroid and saponin natural products from cholesterol such as diosgenin and analogs (e.g. furostanol and spirostanol), plant defense compounds used as main precursors for the industrial production of steroid hormones. During the 5,6-spiroketalization of cholesterol, catalyzes the hydroxylation of cholesterol to form 16S,22S-dihydroxycholesterol and, possibly, the subsequent conversion of 16S,22S-dihydroxycholesterol into 16-oxo-22-hydroxy-cholesterol and 16-hydroxy-22-oxo-cholesterol. 16-hydroxy-22-oxo-cholesterol submit a spontaneous reaction leading to the production of furostanol-type steroid diastereomers, precursors of diosgenin. The chain is Cholesterol 16,22-dihydroxylase CYP90G4 from Trigonella foenum-graecum (Fenugreek).